Reading from the N-terminus, the 592-residue chain is Glycosyltransferase 25 family member (592 aa).

The signal sequence occupies residues 1–13 (MLALLLTTTIVSG). Residues asparagine 249 and asparagine 510 are each glycosylated (N-linked (GlcNAc...) asparagine). Composition is skewed to basic and acidic residues over residues 552–563 (RIQEPKKGDKEQ) and 579–592 (GEHD…RSEL). Residues 552–592 (RIQEPKKGDKEQLPNAPALLSESGIGQGEHDLETKNRRSEL) form a disordered region. The Prevents secretion from ER signature appears at 589–592 (RSEL).

Belongs to the glycosyltransferase 25 family.

The protein resides in the endoplasmic reticulum lumen. The protein is Glycosyltransferase 25 family member of Anopheles gambiae (African malaria mosquito).